A 92-amino-acid chain; its full sequence is Large ribosomal subunit protein eL43 (92 aa).

A C4-type zinc finger spans residues 39 to 60 (CDFCGKYGMKRQAVGIWCCKGC).

It belongs to the eukaryotic ribosomal protein eL43 family.

In Ostreococcus tauri, this protein is Large ribosomal subunit protein eL43 (RPL37a).